The sequence spans 357 residues: U3 small nucleolar ribonucleoprotein protein LCP5 (357 aa).

The residue at position 2 (Ser-2) is an N-acetylserine. 2 disordered regions span residues 146–211 and 301–357; these read STLV…YKPP and NKAE…QRRL. Acidic residues predominate over residues 155 to 166; it reads DDSEDDESSEDE. Over residues 171–183 the composition is skewed to polar residues; that stretch reads PNTSGIINTNKKS. 2 stretches are compositionally biased toward basic and acidic residues: residues 187–196 and 348–357; these read RVEETAKQEN and SAWDRAQRRL.

The protein localises to the nucleus. Its subcellular location is the nucleolus. In terms of biological role, component of the U3 small nucleolar ribonucleoprotein. Required for the early cleavages at sites A0, A1 and A2 of the pre-ribosomal RNA. Participates in ribosome biogenesis. This chain is U3 small nucleolar ribonucleoprotein protein LCP5 (LCP5), found in Saccharomyces cerevisiae (strain ATCC 204508 / S288c) (Baker's yeast).